Consider the following 452-residue polypeptide: Trigger factor (452 aa).

In terms of domain architecture, PPIase FKBP-type spans 162–247 (GDTVTIDYKG…IHEVKSKQLP (86 aa)). The segment at 427–452 (AKAKLEAKEAEEAEDKEEAEDKKENK) is disordered.

The protein belongs to the FKBP-type PPIase family. Tig subfamily.

It localises to the cytoplasm. It carries out the reaction [protein]-peptidylproline (omega=180) = [protein]-peptidylproline (omega=0). Involved in protein export. Acts as a chaperone by maintaining the newly synthesized protein in an open conformation. Functions as a peptidyl-prolyl cis-trans isomerase. The chain is Trigger factor from Lactobacillus helveticus (strain DPC 4571).